A 156-amino-acid polypeptide reads, in one-letter code: Ribosomal RNA large subunit methyltransferase H (156 aa).

S-adenosyl-L-methionine is bound by residues Leu-73, Gly-104, and 123–128; that span reads LSPLTL.

This sequence belongs to the RNA methyltransferase RlmH family. Homodimer.

The protein resides in the cytoplasm. The catalysed reaction is pseudouridine(1915) in 23S rRNA + S-adenosyl-L-methionine = N(3)-methylpseudouridine(1915) in 23S rRNA + S-adenosyl-L-homocysteine + H(+). In terms of biological role, specifically methylates the pseudouridine at position 1915 (m3Psi1915) in 23S rRNA. The chain is Ribosomal RNA large subunit methyltransferase H from Aliivibrio fischeri (strain MJ11) (Vibrio fischeri).